A 597-amino-acid chain; its full sequence is Probable translation initiation factor IF-2 (597 aa).

Residues 8–225 (LRQPIVVVLG…LLAGLTQQYL (218 aa)) form the tr-type G domain. Residues 17–24 (GHVDHGKT) are G1. Position 17 to 24 (17 to 24 (GHVDHGKT)) interacts with GTP. Positions 42–46 (EMTQE) are G2. Residues 81-84 (DTPG) are G3. GTP-binding positions include 81–85 (DTPGH) and 135–138 (NKID). Positions 135 to 138 (NKID) are G4. A G5 region spans residues 203 to 205 (SGK).

This sequence belongs to the TRAFAC class translation factor GTPase superfamily. Classic translation factor GTPase family. IF-2 subfamily.

Function in general translation initiation by promoting the binding of the formylmethionine-tRNA to ribosomes. Seems to function along with eIF-2. The chain is Probable translation initiation factor IF-2 from Metallosphaera sedula (strain ATCC 51363 / DSM 5348 / JCM 9185 / NBRC 15509 / TH2).